The following is a 353-amino-acid chain: Polyprenal reductase 2 (353 aa).

The next 6 membrane-spanning stretches (helical) occupy residues 11–31, 78–98, 175–195, 234–254, 291–308, and 313–335; these read PLLC…ALPI, FMHF…AIWF, MHIV…LSLA, PLLK…WGSL, YLAE…SGAE, and WFLF…NWYL.

This sequence belongs to the steroid 5-alpha reductase family. Polyprenal reductase subfamily.

It is found in the cell membrane. It carries out the reaction a di-trans,poly-cis-dolichal + NADP(+) = a di-trans,poly-cis-polyprenal + NADPH + H(+). It participates in protein modification; protein glycosylation. In terms of biological role, plays a key role in early steps of protein N-linked glycosylation by being involved in the conversion of polyprenol into dolichol. Acts as a polyprenal reductase that mediates the reduction of polyprenal into dolichal in a NADP-dependent mechanism. Dolichols are required for the synthesis of dolichol-linked monosaccharides and the oligosaccharide precursor used for N-glycosylation. This chain is Polyprenal reductase 2, found in Oryza sativa subsp. indica (Rice).